The sequence spans 30 residues: Truncated interleukin-1-binding protein (30 aa).

The N-terminal stretch at 1–18 (MSILPVIFLPIFFYSSFV) is a signal peptide.

Belongs to the interleukin-1 receptor family.

This chain is Truncated interleukin-1-binding protein, found in Vaccinia virus (strain Copenhagen) (VACV).